We begin with the raw amino-acid sequence, 99 residues long: Small ribosomal subunit protein eS24 (99 aa).

It belongs to the eukaryotic ribosomal protein eS24 family.

This is Small ribosomal subunit protein eS24 from Pyrococcus abyssi (strain GE5 / Orsay).